The chain runs to 298 residues: ATP synthase gamma chain (298 aa).

This sequence belongs to the ATPase gamma chain family. As to quaternary structure, F-type ATPases have 2 components, CF(1) - the catalytic core - and CF(0) - the membrane proton channel. CF(1) has five subunits: alpha(3), beta(3), gamma(1), delta(1), epsilon(1). CF(0) has three main subunits: a, b and c.

The protein localises to the cell membrane. Functionally, produces ATP from ADP in the presence of a proton gradient across the membrane. The gamma chain is believed to be important in regulating ATPase activity and the flow of protons through the CF(0) complex. The chain is ATP synthase gamma chain from Parafrankia sp. (strain EAN1pec).